Here is a 253-residue protein sequence, read N- to C-terminus: Imidazole glycerol phosphate synthase subunit HisF (253 aa).

Active-site residues include Asp-11 and Asp-130.

The protein belongs to the HisA/HisF family. As to quaternary structure, heterodimer of HisH and HisF.

It localises to the cytoplasm. It catalyses the reaction 5-[(5-phospho-1-deoxy-D-ribulos-1-ylimino)methylamino]-1-(5-phospho-beta-D-ribosyl)imidazole-4-carboxamide + L-glutamine = D-erythro-1-(imidazol-4-yl)glycerol 3-phosphate + 5-amino-1-(5-phospho-beta-D-ribosyl)imidazole-4-carboxamide + L-glutamate + H(+). It functions in the pathway amino-acid biosynthesis; L-histidine biosynthesis; L-histidine from 5-phospho-alpha-D-ribose 1-diphosphate: step 5/9. In terms of biological role, IGPS catalyzes the conversion of PRFAR and glutamine to IGP, AICAR and glutamate. The HisF subunit catalyzes the cyclization activity that produces IGP and AICAR from PRFAR using the ammonia provided by the HisH subunit. This Cereibacter sphaeroides (strain KD131 / KCTC 12085) (Rhodobacter sphaeroides) protein is Imidazole glycerol phosphate synthase subunit HisF.